Here is a 219-residue protein sequence, read N- to C-terminus: Small ribosomal subunit protein uS3c (219 aa).

The region spanning 47–118 (IRNHVRNSSN…KLRMTLVEVL (72 aa)) is the KH type-2 domain.

The protein belongs to the universal ribosomal protein uS3 family. In terms of assembly, part of the 30S ribosomal subunit.

It is found in the plastid. It localises to the chloroplast. This is Small ribosomal subunit protein uS3c (rps3) from Chara vulgaris (Common stonewort).